The chain runs to 756 residues: Polyribonucleotide nucleotidyltransferase (756 aa).

2 residues coordinate Mg(2+): Asp527 and Asp533. Residues 593-652 form the KH domain; the sequence is PRITTIKVPVDKIGEVIGPKGKMINSITEETGASISIEDDGTVFVGASNGEAAQAAIDKI. Residues 664-733 enclose the S1 motif domain; that stretch reads GERFLGTVVK…NRGKISLVLV (70 aa).

This sequence belongs to the polyribonucleotide nucleotidyltransferase family. Requires Mg(2+) as cofactor.

Its subcellular location is the cytoplasm. It catalyses the reaction RNA(n+1) + phosphate = RNA(n) + a ribonucleoside 5'-diphosphate. Involved in mRNA degradation. Catalyzes the phosphorolysis of single-stranded polyribonucleotides processively in the 3'- to 5'-direction. The chain is Polyribonucleotide nucleotidyltransferase from Mycolicibacterium gilvum (strain PYR-GCK) (Mycobacterium gilvum (strain PYR-GCK)).